A 619-amino-acid polypeptide reads, in one-letter code: Guanylate cyclase soluble subunit beta-1 (619 aa).

His-105 is a binding site for heme. The Guanylate cyclase domain maps to 421–554; it reads TILFSGIVGF…NTVNLTSRTE (134 aa).

This sequence belongs to the adenylyl cyclase class-4/guanylyl cyclase family. As to quaternary structure, the active enzyme is formed by a heterodimer of an alpha and a beta subunit. Homotetramer; dimer of dimers (in vitro). Heterodimer with GUCY1A1. Can also form inactive homodimers in vitro. The cofactor is heme. In terms of tissue distribution, lung and brain.

The protein localises to the cytoplasm. It catalyses the reaction GTP = 3',5'-cyclic GMP + diphosphate. Its activity is regulated as follows. Activated by nitric oxide in the presence of magnesium or manganese ions. In terms of biological role, mediates responses to nitric oxide (NO) by catalyzing the biosynthesis of the signaling molecule cGMP. The polypeptide is Guanylate cyclase soluble subunit beta-1 (Gucy1b1) (Rattus norvegicus (Rat)).